The sequence spans 161 residues: Myosin regulatory light chain (161 aa).

Ser-13 and Ser-14 each carry phosphoserine. 3 EF-hand domains span residues 20 to 55, 56 to 91, and 93 to 128; these read EQVA…FGVF, VMED…RMKQ, and SNEQ…LGDK.

Myosin is a hexamer of 2 heavy chains and 4 light chains (two regulatory light chains and two essential light chains).

This chain is Myosin regulatory light chain (mlcR), found in Dictyostelium discoideum (Social amoeba).